The chain runs to 461 residues: Kynurenine 3-monooxygenase (461 aa).

2 helical membrane-spanning segments follow: residues 395 to 415 (TIMN…VTFS) and 432 to 452 (ILSR…AAGI).

This sequence belongs to the aromatic-ring hydroxylase family. KMO subfamily. FAD is required as a cofactor.

It is found in the mitochondrion. It localises to the membrane. It carries out the reaction L-kynurenine + NADPH + O2 + H(+) = 3-hydroxy-L-kynurenine + NADP(+) + H2O. Its pathway is cofactor biosynthesis; NAD(+) biosynthesis; quinolinate from L-kynurenine: step 1/3. Catalyzes the hydroxylation of L-kynurenine (L-Kyn) to form 3-hydroxy-L-kynurenine (L-3OHKyn). Required for synthesis of quinolinic acid. In Caenorhabditis elegans, this protein is Kynurenine 3-monooxygenase.